We begin with the raw amino-acid sequence, 309 residues long: Ribonuclease Z (309 aa).

Residues His63, His65, Asp67, His68, His145, Asp216, and His274 each contribute to the Zn(2+) site. Residue Asp67 is the Proton acceptor of the active site.

Belongs to the RNase Z family. As to quaternary structure, homodimer. It depends on Zn(2+) as a cofactor.

It catalyses the reaction Endonucleolytic cleavage of RNA, removing extra 3' nucleotides from tRNA precursor, generating 3' termini of tRNAs. A 3'-hydroxy group is left at the tRNA terminus and a 5'-phosphoryl group is left at the trailer molecule.. Zinc phosphodiesterase, which displays some tRNA 3'-processing endonuclease activity. Probably involved in tRNA maturation, by removing a 3'-trailer from precursor tRNA. This Streptococcus agalactiae serotype V (strain ATCC BAA-611 / 2603 V/R) protein is Ribonuclease Z.